The primary structure comprises 294 residues: UDP-N-acetylenolpyruvoylglucosamine reductase (294 aa).

Residues 26-189 (VGGQADVLFK…IEAEFKGVSS (164 aa)) form the FAD-binding PCMH-type domain. R169 is an active-site residue. C218 (proton donor) is an active-site residue. E288 is an active-site residue.

The protein belongs to the MurB family. FAD serves as cofactor.

The protein resides in the cytoplasm. It catalyses the reaction UDP-N-acetyl-alpha-D-muramate + NADP(+) = UDP-N-acetyl-3-O-(1-carboxyvinyl)-alpha-D-glucosamine + NADPH + H(+). Its pathway is cell wall biogenesis; peptidoglycan biosynthesis. Functionally, cell wall formation. The protein is UDP-N-acetylenolpyruvoylglucosamine reductase of Wolbachia pipientis subsp. Culex pipiens (strain wPip).